A 677-amino-acid chain; its full sequence is Methionine--tRNA ligase (677 aa).

A 'HIGH' region motif is present at residues 15–25 (PYANGSIHLGH). Cysteine 146, cysteine 149, cysteine 159, and cysteine 162 together coordinate Zn(2+). The 'KMSKS' region signature appears at 333-337 (KMSKS). An ATP-binding site is contributed by lysine 336. A tRNA-binding domain is found at 575–677 (DFAKVDLRVA…AGAKPGHQVK (103 aa)).

This sequence belongs to the class-I aminoacyl-tRNA synthetase family. MetG type 1 subfamily. In terms of assembly, homodimer. Zn(2+) is required as a cofactor.

The protein resides in the cytoplasm. The enzyme catalyses tRNA(Met) + L-methionine + ATP = L-methionyl-tRNA(Met) + AMP + diphosphate. In terms of biological role, is required not only for elongation of protein synthesis but also for the initiation of all mRNA translation through initiator tRNA(fMet) aminoacylation. This chain is Methionine--tRNA ligase, found in Escherichia coli (strain UTI89 / UPEC).